Consider the following 225-residue polypeptide: Ribonuclease 3 (225 aa).

An RNase III domain is found at methionine 7–glycine 132. Glutamate 45 contacts Mg(2+). Aspartate 49 is an active-site residue. Mg(2+)-binding residues include aspartate 118 and glutamate 121. Glutamate 121 is an active-site residue. A DRBM domain is found at aspartate 157 to aspartate 225.

The protein belongs to the ribonuclease III family. As to quaternary structure, homodimer. Mg(2+) is required as a cofactor.

It is found in the cytoplasm. It carries out the reaction Endonucleolytic cleavage to 5'-phosphomonoester.. In terms of biological role, digests double-stranded RNA. Involved in the processing of primary rRNA transcript to yield the immediate precursors to the large and small rRNAs (23S and 16S). Processes some mRNAs, and tRNAs when they are encoded in the rRNA operon. Processes pre-crRNA and tracrRNA of type II CRISPR loci if present in the organism. The chain is Ribonuclease 3 from Ruegeria pomeroyi (strain ATCC 700808 / DSM 15171 / DSS-3) (Silicibacter pomeroyi).